Here is a 115-residue protein sequence, read N- to C-terminus: Nucleoid-associated protein LBL_0065 (115 aa).

Belongs to the YbaB/EbfC family. Homodimer.

The protein resides in the cytoplasm. The protein localises to the nucleoid. Functionally, binds to DNA and alters its conformation. May be involved in regulation of gene expression, nucleoid organization and DNA protection. The protein is Nucleoid-associated protein LBL_0065 of Leptospira borgpetersenii serovar Hardjo-bovis (strain L550).